Consider the following 281-residue polypeptide: 4-diphosphocytidyl-2-C-methyl-D-erythritol kinase (281 aa).

Lys-15 is a catalytic residue. ATP is bound at residue 98-108 (PTGAGLGGGSS). The active site involves Asp-140.

It belongs to the GHMP kinase family. IspE subfamily.

It carries out the reaction 4-CDP-2-C-methyl-D-erythritol + ATP = 4-CDP-2-C-methyl-D-erythritol 2-phosphate + ADP + H(+). It participates in isoprenoid biosynthesis; isopentenyl diphosphate biosynthesis via DXP pathway; isopentenyl diphosphate from 1-deoxy-D-xylulose 5-phosphate: step 3/6. Catalyzes the phosphorylation of the position 2 hydroxy group of 4-diphosphocytidyl-2C-methyl-D-erythritol. This is 4-diphosphocytidyl-2-C-methyl-D-erythritol kinase from Neisseria gonorrhoeae (strain NCCP11945).